A 333-amino-acid chain; its full sequence is GTP 3',8-cyclase (333 aa).

Residues 7-221 form the Radical SAM core domain; the sequence is KFGRVHDYIR…FEACNEAGYE (215 aa). Arginine 16 is a binding site for GTP. [4Fe-4S] cluster is bound by residues cysteine 23 and cysteine 27. Tyrosine 29 contacts S-adenosyl-L-methionine. Cysteine 30 serves as a coordination point for [4Fe-4S] cluster. Arginine 66 contacts GTP. Glycine 70 provides a ligand contact to S-adenosyl-L-methionine. Threonine 97 provides a ligand contact to GTP. Residue serine 121 coordinates S-adenosyl-L-methionine. Lysine 158 is a GTP binding site. Methionine 192 is a binding site for S-adenosyl-L-methionine. The [4Fe-4S] cluster site is built by cysteine 257 and cysteine 260. GTP is bound at residue 262–264; the sequence is RLR. Cysteine 274 serves as a coordination point for [4Fe-4S] cluster.

Belongs to the radical SAM superfamily. MoaA family. Monomer and homodimer. Requires [4Fe-4S] cluster as cofactor.

The enzyme catalyses GTP + AH2 + S-adenosyl-L-methionine = (8S)-3',8-cyclo-7,8-dihydroguanosine 5'-triphosphate + 5'-deoxyadenosine + L-methionine + A + H(+). The protein operates within cofactor biosynthesis; molybdopterin biosynthesis. In terms of biological role, catalyzes the cyclization of GTP to (8S)-3',8-cyclo-7,8-dihydroguanosine 5'-triphosphate. The polypeptide is GTP 3',8-cyclase (Listeria monocytogenes serovar 1/2a (strain ATCC BAA-679 / EGD-e)).